Reading from the N-terminus, the 506-residue chain is Probable cytochrome P450 309a1 (506 aa).

Phosphothreonine occurs at positions 75, 78, and 81. Cys452 contributes to the heme binding site.

The protein belongs to the cytochrome P450 family. Requires heme as cofactor.

It localises to the endoplasmic reticulum membrane. The protein localises to the microsome membrane. In terms of biological role, may be involved in the metabolism of insect hormones and in the breakdown of synthetic insecticides. This Drosophila melanogaster (Fruit fly) protein is Probable cytochrome P450 309a1 (Cyp309a1).